A 421-amino-acid chain; its full sequence is D-aspartate ligase (421 aa).

The ATP-grasp domain maps to 130-332; sequence YEVCEEYDLP…LARFVTEDRV (203 aa). ATP is bound at residue 161–224; it reads PFEFPVALKP…QDFIPGDDSN (64 aa). Mg(2+) contacts are provided by D290, E304, and N306.

Mg(2+) serves as cofactor.

The enzyme catalyses [beta-GlcNAc-(1-&gt;4)-Mur2Ac(oyl-L-Ala-gamma-D-Glu-L-Lys-D-Ala-D-Ala)](n) + n D-aspartate + n ATP = [beta-GlcNAc-(1-&gt;4)-Mur2Ac(oyl-L-Ala-gamma-D-Glu-6-N-(beta-D-Asp)-L-Lys-D-Ala-D-Ala)]n + n ADP + n phosphate + n H(+). It participates in cell wall biogenesis; peptidoglycan biosynthesis. Functionally, catalyzes the addition of D-aspartate onto the lysine residue in the peptidoglycan precursor UDP-MurNAc-pentapeptide. The ligation occurs between the beta-carboxylate of D-Asp and the epsilon-amino group of L-Lys. Is highly specific for D-aspartate, as L-aspartate, D-glutamate, D-alanine, D-iso-asparagine and D-malate are not substrates. The protein is D-aspartate ligase of Enterococcus faecium (strain Aus0004).